We begin with the raw amino-acid sequence, 868 residues long: mRNA-capping enzyme (868 aa).

Lysine 282 acts as the N6-GMP-lysine intermediate in catalysis. The mRNA cap 0 methyltransferase domain occupies 594–868; it reads GIYRAQTALI…LFGFICLRKN (275 aa). S-adenosyl-L-methionine is bound by residues lysine 607, glycine 624, aspartate 646, and 710–712; that span reads LFI.

This sequence in the N-terminal section; belongs to the dsDNA virus mRNA guanylyltransferase family. The protein in the C-terminal section; belongs to the class I-like SAM-binding methyltransferase superfamily. mRNA cap 0 methyltransferase family. As to quaternary structure, part of the viral DNA-directed RNA polymerase that consists of 8 polII-like subunits (RPB1, RPB2, RPB3, RPB5, RPB6, RPB7, RPB9, RPB10), a capping enzyme and a termination factor.

It is found in the virion. It catalyses the reaction a 5'-end triphospho-ribonucleoside in mRNA + H2O = a 5'-end diphospho-ribonucleoside in mRNA + phosphate + H(+). The enzyme catalyses a 5'-end diphospho-ribonucleoside in mRNA + GTP + H(+) = a 5'-end (5'-triphosphoguanosine)-ribonucleoside in mRNA + diphosphate. It carries out the reaction a 5'-end (5'-triphosphoguanosine)-ribonucleoside in mRNA + S-adenosyl-L-methionine = a 5'-end (N(7)-methyl 5'-triphosphoguanosine)-ribonucleoside in mRNA + S-adenosyl-L-homocysteine. Its pathway is mRNA processing; mRNA capping. Probably catalyzes the second reaction in the mRNA cap formation pathway. Forms a covalent complex with GTP. This Ornithodoros (relapsing fever ticks) protein is mRNA-capping enzyme.